Consider the following 108-residue polypeptide: Glutaredoxin-like protein YDR286C homolog (108 aa).

Residues Cys-22 and Cys-25 are joined by a disulfide bond.

It belongs to the glutaredoxin family. YDR286C subfamily.

The protein is Glutaredoxin-like protein YDR286C homolog of Dictyostelium discoideum (Social amoeba).